The chain runs to 478 residues: Vitronectin (478 aa).

An N-terminal signal peptide occupies residues 1–19; that stretch reads MAPLRPLLILALLAWVALA. The SMB domain occupies 20–63; it reads DQESCKGRCTEGFNVDKKCQCDELCSYYQSCCTDYTAECKPQVT. 7 cysteine pairs are disulfide-bonded: Cys-24-Cys-28, Cys-24-Cys-40, Cys-28-Cys-58, Cys-38-Cys-40, Cys-38-Cys-51, Cys-44-Cys-50, and Cys-51-Cys-58. The Cell attachment site signature appears at 64–66; it reads RGD. Thr-69 is subject to Phosphothreonine; by CK2; in vitro. Tyr-75 bears the Sulfotyrosine mark. Residue Thr-76 is modified to Phosphothreonine; by CK2; in vitro. Tyr-78 carries the sulfotyrosine modification. An N-linked (GlcNAc...) (complex) asparagine glycan is attached at Asn-86. Residues 91–158 are disordered; it reads EQVGGPSLTS…PPAEEELCSG (68 aa). A compositionally biased stretch (polar residues) spans 97 to 112; that stretch reads SLTSDLQAQSKGNPEQ. A phosphoserine mark is found at Ser-130 and Ser-137. Residues 133–143 are compositionally biased toward basic and acidic residues; it reads EGIDSRPETLH. 3 Hemopexin repeats span residues 158–202, 203–250, and 251–305; these read GKPF…VWGI, EGPI…FDGI, and PDNV…FEHF. An N-linked (GlcNAc...) asparagine glycan is attached at Asn-169. A glycan (N-linked (GlcNAc...) (complex) asparagine) is linked at Asn-242. Tyr-282 is modified (sulfotyrosine). An intrachain disulfide couples Cys-293 to Cys-430. Position 312 is a phosphoserine (Ser-312). Positions 362-395 are heparin-binding; that stretch reads RPSLAKKQRFRHRNRKGYRSQRGHSRGRNQNSRR. The interval 364-398 is disordered; sequence SLAKKQRFRHRNRKGYRSQRGHSRGRNQNSRRPSR. The segment covering 365–388 has biased composition (basic residues); the sequence is LAKKQRFRHRNRKGYRSQRGHSRG. Ser-397 carries the phosphoserine; by PKA modification. Sulfotyrosine occurs at positions 417 and 420. One copy of the Hemopexin 4 repeat lies at 419–472; that stretch reads DYRMDWLVPATCEPIQSVFFFSGDKYYRVNLRTRRVDTVDPPYPRSIAQYWLGC.

As to quaternary structure, exists in two forms: a single chain 75 kDa form (V75) and a clipped form composed of two chains (65 kDa and 10 kDa) (V65+V10) which are held together by a disulfide bond. Interacts with SERPINE1/PAI1, insulin and C1QBP. In terms of assembly, (Microbial infection) Interacts (via hemopexin repeat 2) with P.falciparum (isolate CDC / Honduras) SERA5 P47 (via C-terminus); may form heterotetramers of two VTN and SERA5 P47 heterodimers; the interaction may protect merozoites from phagocytosis by host monocytes; VTN glycosylation appears to be dispensable for the interaction. Post-translationally, sulfated on tyrosine residues. In terms of processing, N- and O-glycosylated. Phosphorylation on Thr-69 and Thr-76 favors cell adhesion and spreading. Post-translationally, it has been suggested that the active SMB domain may be permitted considerable disulfide bond heterogeneity or variability, thus two alternate disulfide patterns based on 3D structures are described with 1 disulfide bond conserved in both. In terms of processing, phosphorylation sites are present in the extracellular medium. As to expression, expressed in the retina pigment epithelium (at protein level). Expressed in plasma (at protein level). Expressed in serum (at protein level).

It localises to the secreted. Its subcellular location is the extracellular space. It is found in the parasitophorous vacuole. In terms of biological role, vitronectin is a cell adhesion and spreading factor found in serum and tissues. Vitronectin interact with glycosaminoglycans and proteoglycans. Is recognized by certain members of the integrin family and serves as a cell-to-substrate adhesion molecule. Inhibitor of the membrane-damaging effect of the terminal cytolytic complement pathway. Somatomedin-B is a growth hormone-dependent serum factor with protease-inhibiting activity. This chain is Vitronectin (VTN), found in Homo sapiens (Human).